The sequence spans 288 residues: Bifunctional protein FolD (288 aa).

NADP(+) contacts are provided by residues 163-165, Ser188, and Ile229; that span reads GRS.

The protein belongs to the tetrahydrofolate dehydrogenase/cyclohydrolase family. Homodimer.

The enzyme catalyses (6R)-5,10-methylene-5,6,7,8-tetrahydrofolate + NADP(+) = (6R)-5,10-methenyltetrahydrofolate + NADPH. The catalysed reaction is (6R)-5,10-methenyltetrahydrofolate + H2O = (6R)-10-formyltetrahydrofolate + H(+). The protein operates within one-carbon metabolism; tetrahydrofolate interconversion. In terms of biological role, catalyzes the oxidation of 5,10-methylenetetrahydrofolate to 5,10-methenyltetrahydrofolate and then the hydrolysis of 5,10-methenyltetrahydrofolate to 10-formyltetrahydrofolate. The chain is Bifunctional protein FolD from Campylobacter curvus (strain 525.92).